Consider the following 308-residue polypeptide: 4-hydroxyproline 2-epimerase (308 aa).

C88 serves as the catalytic Proton acceptor. Substrate is bound by residues 89-90 (GH), H208, and D232. C236 (proton donor) is an active-site residue. A substrate-binding site is contributed by 237–238 (GT).

Belongs to the proline racemase family.

It carries out the reaction trans-4-hydroxy-L-proline = cis-4-hydroxy-D-proline. In terms of biological role, catalyzes the epimerization of trans-4-hydroxy-L-proline (t4LHyp) to cis-4-hydroxy-D-proline (c4DHyp). Is likely involved in a degradation pathway that converts t4LHyp to alpha-ketoglutarate. Can also catalyze the epimerization of trans-3-hydroxy-L-proline (t3LHyp) to cis-3-hydroxy-D-proline (c3DHyp), albeit with 200-fold lower efficiency. In Pseudomonas putida (strain ATCC 700007 / DSM 6899 / JCM 31910 / BCRC 17059 / LMG 24140 / F1), this protein is 4-hydroxyproline 2-epimerase.